A 614-amino-acid polypeptide reads, in one-letter code: Sodium- and chloride-dependent betaine transporter (614 aa).

Topologically, residues 1–44 (MDRKVAVHEDGYPVVSWVPEEGEMMDQKGKDQVKDRGQWTNKME) are cytoplasmic. 3 helical membrane-spanning segments follow: residues 45–65 (FVLSVAGEIIGLGNVWRFPYL), 73–92 (AFFIPYFIFFFSCGIPVFFL), and 117–137 (GIGMASVVIESYLNIYYIIIL). The Extracellular segment spans residues 138-210 (AWALFYLFSS…SGIHDLGSLR (73 aa)). The cysteines at positions 157 and 166 are disulfide-linked. Residues Asn-171 and Asn-183 are each glycosylated (N-linked (GlcNAc...) asparagine). A run of 9 helical transmembrane segments spans residues 211-229 (WELALCLLLAWIICYFCIW), 238-255 (VVYFTATFPYLMLIILLI), 291-308 (IFFSFAICQGCLTALGSY), 320-341 (IALCFLNSATSFVAGFVVFSIL), 374-393 (MPLSQLWSCLFFIMLLFLGL), 423-441 (VLILAISVLCYLMGLLLVT), 458-478 (GICLLFLSLFEVICIGWVYGA), 499-518 (ISWLFLTPGLCLATFFFSLS), and 538-556 (IGWLLAFSSMACVPLFIII). Topologically, residues 557–614 (TFLKTQGSFKKRLRRLITPDPSLPQPGRRPPQDGSSAQNCSSSPAKQELIAWEKETHL) are cytoplasmic. A disordered region spans residues 574-602 (TPDPSLPQPGRRPPQDGSSAQNCSSSPAK). Polar residues predominate over residues 589–601 (DGSSAQNCSSSPA).

The protein belongs to the sodium:neurotransmitter symporter (SNF) (TC 2.A.22) family. SLC6A12 subfamily. As to quaternary structure, interacts with LIN7C. As to expression, predominantly expressed in the liver (sinusoidal hepatocyte plasma membranes), also present in the renal medulla, where it localizes to the basolateral membranes of collecting ducts (particularly at the papilla tip) and the thick ascending limbs of Henle (at protein level). Some expression is detected in the leptomeninges, but no expression is detected in brain parenchyma, brain blood vessels, ependymal cells, the renal cortex and the intestine.

It is found in the basolateral cell membrane. It localises to the cell membrane. The enzyme catalyses 4-aminobutanoate(out) + chloride(out) + 3 Na(+)(out) = 4-aminobutanoate(in) + chloride(in) + 3 Na(+)(in). It carries out the reaction glycine betaine(out) + 2 chloride(out) + 3 Na(+)(out) = glycine betaine(in) + 2 chloride(in) + 3 Na(+)(in). Transporter that mediates cellular uptake of betaine and GABA in a sodium- and chloride-dependent process. May have a role in regulation of GABAergic transmission in the brain through the reuptake of GABA into presynaptic terminals, as well as in osmotic regulation. Probably also involved in renal and hepatic osmotic regulation. The sequence is that of Sodium- and chloride-dependent betaine transporter (Slc6a12) from Mus musculus (Mouse).